A 386-amino-acid polypeptide reads, in one-letter code: Putative nickel insertion protein (386 aa).

It belongs to the LarC family.

This chain is Putative nickel insertion protein, found in Dictyoglomus thermophilum (strain ATCC 35947 / DSM 3960 / H-6-12).